A 272-amino-acid chain; its full sequence is 3-methyl-2-oxobutanoate hydroxymethyltransferase (272 aa).

Residues Asp43 and Asp82 each coordinate Mg(2+). Residues 43–44, Asp82, and Lys112 each bind 3-methyl-2-oxobutanoate; that span reads DS. Mg(2+) is bound at residue Glu114. Residue Glu179 is the Proton acceptor of the active site.

The protein belongs to the PanB family. Homodecamer; pentamer of dimers. It depends on Mg(2+) as a cofactor.

Its subcellular location is the cytoplasm. The catalysed reaction is 3-methyl-2-oxobutanoate + (6R)-5,10-methylene-5,6,7,8-tetrahydrofolate + H2O = 2-dehydropantoate + (6S)-5,6,7,8-tetrahydrofolate. Its pathway is cofactor biosynthesis; (R)-pantothenate biosynthesis; (R)-pantoate from 3-methyl-2-oxobutanoate: step 1/2. Catalyzes the reversible reaction in which hydroxymethyl group from 5,10-methylenetetrahydrofolate is transferred onto alpha-ketoisovalerate to form ketopantoate. The protein is 3-methyl-2-oxobutanoate hydroxymethyltransferase of Staphylococcus aureus (strain Mu3 / ATCC 700698).